The following is a 346-amino-acid chain: D-fructose 1,6-bisphosphatase class 2/sedoheptulose 1,7-bisphosphatase (346 aa).

Mn(2+)-binding residues include Asp33, Glu57, Asp97, and Glu100. Substrate-binding positions include 100–102 (EGT), Tyr131, 176–178 (RDR), and 198–200 (DGD). Position 225 (Glu225) interacts with Mn(2+).

It belongs to the FBPase class 2 family. Homotetramer. It depends on Mn(2+) as a cofactor.

The enzyme catalyses beta-D-fructose 1,6-bisphosphate + H2O = beta-D-fructose 6-phosphate + phosphate. The catalysed reaction is D-sedoheptulose 1,7-bisphosphate + H2O = D-sedoheptulose 7-phosphate + phosphate. Its pathway is carbohydrate biosynthesis; Calvin cycle. Catalyzes the hydrolysis of fructose 1,6-bisphosphate (Fru 1,6-P2) and sedoheptulose 1,7-bisphosphate (Sed 1,7-P2) to fructose 6-phosphate and sedoheptulose 7-phosphate, respectively. The polypeptide is D-fructose 1,6-bisphosphatase class 2/sedoheptulose 1,7-bisphosphatase (Gloeobacter violaceus (strain ATCC 29082 / PCC 7421)).